The primary structure comprises 435 residues: Mitochondrial association factor 1 form b0 (435 aa).

An N-terminal signal peptide occupies residues Met-1–Gly-27. Over Ser-28–Arg-96 the chain is Vacuolar. The interval Gly-43–Ala-89 is disordered. Basic and acidic residues predominate over residues Val-55–Glu-64. A helical membrane pass occupies residues Ile-97–Arg-117. The Cytoplasmic segment spans residues Arg-118–Asp-435. The segment at Arg-120–Ser-162 is disordered.

It localises to the parasitophorous vacuole membrane. Its function is as follows. During host cell infection by tachyzoites, does not play a role in tethering the parasitophorous vacuole to the host mitochondria. The protein is Mitochondrial association factor 1 form b0 of Toxoplasma gondii.